The chain runs to 373 residues: Spermidine/putrescine import ATP-binding protein PotA (373 aa).

The region spanning 6–236 is the ABC transporter domain; the sequence is LSLSNLTKQF…PANLFTARFV (231 aa). 38–45 lines the ATP pocket; sequence GPSGCGKT.

The protein belongs to the ABC transporter superfamily. Spermidine/putrescine importer (TC 3.A.1.11.1) family. In terms of assembly, the complex is composed of two ATP-binding proteins (PotA), two transmembrane proteins (PotB and PotC) and a solute-binding protein (PotD).

Its subcellular location is the cell inner membrane. The enzyme catalyses ATP + H2O + polyamine-[polyamine-binding protein]Side 1 = ADP + phosphate + polyamineSide 2 + [polyamine-binding protein]Side 1.. Part of the ABC transporter complex PotABCD involved in spermidine/putrescine import. Responsible for energy coupling to the transport system. The chain is Spermidine/putrescine import ATP-binding protein PotA from Marinobacter nauticus (strain ATCC 700491 / DSM 11845 / VT8) (Marinobacter aquaeolei).